We begin with the raw amino-acid sequence, 349 residues long: DNA-directed RNA polymerase subunit Rpo1N (349 aa).

Positions E306–D349 are disordered. Over residues A324–S334 the composition is skewed to basic and acidic residues.

The protein belongs to the RNA polymerase beta' chain family. In terms of assembly, part of the RNA polymerase complex.

Its subcellular location is the cytoplasm. The enzyme catalyses RNA(n) + a ribonucleoside 5'-triphosphate = RNA(n+1) + diphosphate. Its function is as follows. DNA-dependent RNA polymerase (RNAP) catalyzes the transcription of DNA into RNA using the four ribonucleoside triphosphates as substrates. Forms the clamp head domain. The chain is DNA-directed RNA polymerase subunit Rpo1N from Halococcus morrhuae (Micrococcus morrhuae).